Reading from the N-terminus, the 142-residue chain is MFDIGASELLVLVIVAIVVIGPKDLPLALRTAGRWVAKMRRVSNHFRAGIETMIREAEMEEMERKWKEQNERIMRETAAQETAAAQGQTPAAAEDQNDPFPTPLAADAPHTDPVMTGPMPPEAKVEARVEEAPAARPGSQQP.

The helical transmembrane segment at 1-21 (MFDIGASELLVLVIVAIVVIG) threads the bilayer. The disordered stretch occupies residues 75-142 (RETAAQETAA…PAARPGSQQP (68 aa)). Over residues 76 to 94 (ETAAQETAAAQGQTPAAAE) the composition is skewed to low complexity. Basic and acidic residues predominate over residues 123-133 (AKVEARVEEAP).

Belongs to the TatB family. The Tat system comprises two distinct complexes: a TatABC complex, containing multiple copies of TatA, TatB and TatC subunits, and a separate TatA complex, containing only TatA subunits. Substrates initially bind to the TatABC complex, which probably triggers association of the separate TatA complex to form the active translocon.

The protein localises to the cell inner membrane. In terms of biological role, part of the twin-arginine translocation (Tat) system that transports large folded proteins containing a characteristic twin-arginine motif in their signal peptide across membranes. Together with TatC, TatB is part of a receptor directly interacting with Tat signal peptides. TatB may form an oligomeric binding site that transiently accommodates folded Tat precursor proteins before their translocation. This is Sec-independent protein translocase protein TatB from Novosphingobium aromaticivorans (strain ATCC 700278 / DSM 12444 / CCUG 56034 / CIP 105152 / NBRC 16084 / F199).